We begin with the raw amino-acid sequence, 311 residues long: Ribosomal RNA small subunit methyltransferase H (311 aa).

Residues 32 to 34, Asp-52, Phe-79, Asp-100, and Gln-107 each bind S-adenosyl-L-methionine; that span reads AGH.

It belongs to the methyltransferase superfamily. RsmH family.

It localises to the cytoplasm. The catalysed reaction is cytidine(1402) in 16S rRNA + S-adenosyl-L-methionine = N(4)-methylcytidine(1402) in 16S rRNA + S-adenosyl-L-homocysteine + H(+). In terms of biological role, specifically methylates the N4 position of cytidine in position 1402 (C1402) of 16S rRNA. This Staphylococcus haemolyticus (strain JCSC1435) protein is Ribosomal RNA small subunit methyltransferase H.